A 450-amino-acid polypeptide reads, in one-letter code: Divalent metal cation transporter MntH (450 aa).

11 helical membrane-spanning segments follow: residues 34-54 (LSFLGPGLLVAVGYMDPGNWI), 61-81 (AQYGYTLLFVILISSLSAMLL), 108-128 (IAIIFWIIAELAIIATDIAEV), 141-161 (IPLIVGALITVLDVFLLLFIM), 170-190 (AIVGTLIFTVLFIFIFEVYIS), 212-232 (GILYIALGIIGATIMPHNLYL), 263-283 (IQLSIAFVVNCLLLVLGASLF), 305-325 (PVLGATMGAIMSTLFAVALLA), 361-381 (SLAVIPVIVCLSIFKGNAAKI), 383-403 (QLLVFSQVFLSIALPFCLIPL), and 422-442 (VNIISWTLIIILSILNVYLIV).

The protein belongs to the NRAMP family.

It localises to the cell membrane. In terms of biological role, h(+)-stimulated, divalent metal cation uptake system. In Staphylococcus aureus (strain bovine RF122 / ET3-1), this protein is Divalent metal cation transporter MntH.